The sequence spans 213 residues: MAAAADERSPEDGEDEEEEEQLVLVELSGIIDSDFLSKCENKCKVLGIDTERPILQVDSCVFAGEYEDTLGTCVIFEENVEHADTEGNNKTVLKYKCHTMKKLSMTRTLLTEKKEGEENIGGVEWLQIKDNDFSYRPNMICNFLHENEDEEVVASAPDKSLELEEEEIQMNDSSNLSCEQEKPMHLEIEDSGPLIDIPSETEGSVFMETQMLP.

Over residues 1 to 11 (MAAAADERSPE) the composition is skewed to basic and acidic residues. Disordered regions lie at residues 1 to 20 (MAAA…EEEE) and 191 to 213 (SGPL…QMLP). Ala-2 is modified (N-acetylalanine). Ser-9 carries the phosphoserine modification.

The protein belongs to the TFIIIC subunit 6 family. As to quaternary structure, part of the TFIIIC subcomplex TFIIIC2, consisting of six subunits, GTF3C1, GTF3C2, GTF3C3, GTF3C4, GTF3C5 and GTF3C6. Interacts with GTF3C4 and GTF3C5.

It localises to the nucleus. Functionally, involved in RNA polymerase III-mediated transcription. Integral, tightly associated component of the DNA-binding TFIIIC2 subcomplex that directly binds tRNA and virus-associated RNA promoters. The polypeptide is General transcription factor 3C polypeptide 6 (GTF3C6) (Homo sapiens (Human)).